A 473-amino-acid chain; its full sequence is Serine palmitoyltransferase 1 (473 aa).

The Lumenal portion of the chain corresponds to 1–15 (MATVAEQWVLVEMVQ). Residues 1-66 (MATVAEQWVL…KEELIEEWQP (66 aa)) are interaction with SPTLC2. A helical membrane pass occupies residues 16-36 (ALYEAPAYHLILEGILILWII). At 37–473 (RLVFSKTYKL…IREAAQAVLL (437 aa)) the chain is on the cytoplasmic side. Residue tyrosine 164 is modified to Phosphotyrosine; by ABL.

This sequence belongs to the class-II pyridoxal-phosphate-dependent aminotransferase family. Component of the serine palmitoyltransferase (SPT) complex, which is also composed of SPTLC2 or SPTLC3 and SPTSSA or SPTSSB. The heterodimer with SPTLC2 or SPTLC3 forms the catalytic core of the enzyme, while SPTSSA or SPTSSB subunits determine substrate specificity. SPT also interacts with ORMDL proteins, especially ORMDL3, which negatively regulate SPT activity in the presence of ceramides. Forms dimers of heterodimers with SPTLC2. Interacts with RTN4 (isoform B). The cofactor is pyridoxal 5'-phosphate. Post-translationally, phosphorylation at Tyr-164 inhibits activity and promotes cell survival. As to expression, expressed in astrocytes.

It localises to the endoplasmic reticulum membrane. It carries out the reaction L-serine + hexadecanoyl-CoA + H(+) = 3-oxosphinganine + CO2 + CoA. The catalysed reaction is octadecanoyl-CoA + L-serine + H(+) = 3-oxoeicosasphinganine + CO2 + CoA. The enzyme catalyses tetradecanoyl-CoA + L-serine + H(+) = 3-oxohexadecasphinganine + CO2 + CoA. It catalyses the reaction dodecanoyl-CoA + L-serine + H(+) = 3-oxotetradecasphinganine + CO2 + CoA. Its pathway is lipid metabolism; sphingolipid metabolism. SPT complex catalytic activity is negatively regulated by ORMDL proteins, including ORMDL3, in the presence of ceramides. This mechanism allows to maintain ceramide levels at sufficient concentrations for the production of complex sphingolipids, but which prevents the accumulation of ceramides to levels that trigger apoptosis. Component of the serine palmitoyltransferase multisubunit enzyme (SPT) that catalyzes the initial and rate-limiting step in sphingolipid biosynthesis by condensing L-serine and activated acyl-CoA (most commonly palmitoyl-CoA) to form long-chain bases. The SPT complex is also composed of SPTLC2 or SPTLC3 and SPTSSA or SPTSSB. Within this complex, the heterodimer with SPTLC2 or SPTLC3 forms the catalytic core. The composition of the serine palmitoyltransferase (SPT) complex determines the substrate preference. The SPTLC1-SPTLC2-SPTSSA complex shows a strong preference for C16-CoA substrate, while the SPTLC1-SPTLC3-SPTSSA isozyme uses both C14-CoA and C16-CoA as substrates, with a slight preference for C14-CoA. The SPTLC1-SPTLC2-SPTSSB complex shows a strong preference for C18-CoA substrate, while the SPTLC1-SPTLC3-SPTSSB isozyme displays an ability to use a broader range of acyl-CoAs, without apparent preference. Required for adipocyte cell viability and metabolic homeostasis. The sequence is that of Serine palmitoyltransferase 1 from Rattus norvegicus (Rat).